The primary structure comprises 289 residues: Alpha-soluble NSF attachment protein (289 aa).

The TPR repeat unit spans residues 112–145 (GKYYKEIAELYELEQNFEQAIIYFEKAADIYQSE).

It belongs to the SNAP family.

The protein localises to the membrane. In terms of biological role, required for vesicular transport between the endoplasmic reticulum and the Golgi apparatus. This is Alpha-soluble NSF attachment protein from Vitis vinifera (Grape).